The chain runs to 268 residues: MYTPRQSLYIRGSAGDPLPPVWAALDQKGTHLRRGQLVLVCAGPGTGKSAFVLAYALKSKVPTLYFSADSDAFTQLSRSVSILSGWSLERATRAVREQNIEDAVADSLDEIPIRFNYKASPSLDEIENALAAYDALYEDFPALIVVDNITNVRTDSSEGDDPFSGLESLMDYLHEMGRETGSCVVGLHHVTGPHNDGDKPIPLSGIKGQIGRVPEMILTLHRVSDGFGPDMLNVSTVKNRGGKSDPSGQDFASLEFVGDTMQINDFGH.

In Mycobacterium (Mycobacteriophage L5), this protein is Gene 65 protein (65).